Reading from the N-terminus, the 94-residue chain is Acylphosphatase (94 aa).

The Acylphosphatase-like domain occupies 8–94; the sequence is RLTAWVHGRV…REQITGFHER (87 aa). Residues R23 and N41 contribute to the active site.

It belongs to the acylphosphatase family.

It carries out the reaction an acyl phosphate + H2O = a carboxylate + phosphate + H(+). The sequence is that of Acylphosphatase (acyP) from Mycobacterium sp. (strain JLS).